A 254-amino-acid chain; its full sequence is Type III pantothenate kinase (254 aa).

7–14 provides a ligand contact to ATP; it reads DIGNTRLK. Substrate is bound by residues tyrosine 97 and 104-107; that span reads GSDR. Aspartate 106 acts as the Proton acceptor in catalysis. Residue threonine 134 coordinates ATP. Threonine 184 contributes to the substrate binding site.

It belongs to the type III pantothenate kinase family. In terms of assembly, homodimer. NH4(+) serves as cofactor. It depends on K(+) as a cofactor.

The protein resides in the cytoplasm. The enzyme catalyses (R)-pantothenate + ATP = (R)-4'-phosphopantothenate + ADP + H(+). Its pathway is cofactor biosynthesis; coenzyme A biosynthesis; CoA from (R)-pantothenate: step 1/5. Catalyzes the phosphorylation of pantothenate (Pan), the first step in CoA biosynthesis. In Methylibium petroleiphilum (strain ATCC BAA-1232 / LMG 22953 / PM1), this protein is Type III pantothenate kinase.